Here is a 317-residue protein sequence, read N- to C-terminus: Retinol dehydrogenase 7 (317 aa).

Position 33 to 57 (Phe-33 to Leu-57) interacts with NADP(+). Ser-164 contacts substrate. Catalysis depends on Tyr-176, which acts as the Proton acceptor.

It belongs to the short-chain dehydrogenases/reductases (SDR) family.

The protein resides in the microsome. It localises to the endoplasmic reticulum. The enzyme catalyses all-trans-retinol--[retinol-binding protein] + NAD(+) = all-trans-retinal--[retinol-binding protein] + NADH + H(+). It participates in cofactor metabolism; retinol metabolism. In terms of biological role, acts on retinol bound on cellular retinol-binding protein (CRBP). This Rattus norvegicus (Rat) protein is Retinol dehydrogenase 7.